The sequence spans 220 residues: Catechol O-methyltransferase (220 aa).

Residues valine 44, glutamate 66, 68-69, serine 74, glutamate 92, and alanine 121 contribute to the S-adenosyl-L-methionine site; that span reads GT. Aspartate 139 lines the a divalent metal cation pocket. Aspartate 141 contributes to the S-adenosyl-L-methionine binding site. A divalent metal cation-binding residues include aspartate 165 and asparagine 166.

This sequence belongs to the class I-like SAM-binding methyltransferase superfamily. Cation-dependent O-methyltransferase family. In terms of assembly, homodimer. A divalent metal cation serves as cofactor.

The catalysed reaction is a catechol + S-adenosyl-L-methionine = a guaiacol + S-adenosyl-L-homocysteine + H(+). Its activity is regulated as follows. Inhibited by EDTA. In terms of biological role, catechol O-methyltransferase that can use various catechol-like compounds such as gallic acid (GA), 3,4-dihydroxy-5-methoxy-benzoic acid (5OMeBA), protocatechuic acid (PCA), 3,4-dihydroxy-benzaldehyde (DHA), dopamine, caffeic acid (CA), luteolin, quercetin, and 5-hydroxyuridine. The chain is Catechol O-methyltransferase from Mycobacterium tuberculosis (strain ATCC 25618 / H37Rv).